Consider the following 59-residue polypeptide: Large ribosomal subunit protein bL32 (59 aa).

Residues 1–15 (MANPKRKQSKRRSAN) show a composition bias toward basic residues. The interval 1–48 (MANPKRKQSKRRSANRRAANAFIAPEFAKDPTDGSAFRPHRVNPKNGM) is disordered.

It belongs to the bacterial ribosomal protein bL32 family.

The sequence is that of Large ribosomal subunit protein bL32 from Opitutus terrae (strain DSM 11246 / JCM 15787 / PB90-1).